The following is a 534-amino-acid chain: Corneodesmosin (534 aa).

A signal peptide spans 1–32 (MGLSRAPWMGRVGGRGMMALLLAGLLLPGTLA). 2 disordered regions span residues 38–252 (FSDP…HSVS) and 396–497 (CSPF…GSAG). Composition is skewed to low complexity over residues 64–82 (GFSS…SSAS), 107–185 (GYSQ…SGSA), 200–236 (SQLG…SGGP), 397–415 (SPFS…SSGS), and 431–446 (PGTG…QSSG). Residues 454–472 (GSKSSSSGHPCMSVSSLTL) show a composition bias toward polar residues.

It localises to the secreted. In terms of biological role, important for the epidermal barrier integrity. The polypeptide is Corneodesmosin (CDSN) (Macaca mulatta (Rhesus macaque)).